Reading from the N-terminus, the 281-residue chain is Inhibitor of growth protein 2 (281 aa).

Residues 49-101 (VLRELDNKYQETLKEIDDVYEKYKKEDDSNQKKRLQQHLQRALINSQELGDEK) adopt a coiled-coil conformation. The interval 123–204 (SQCFQDPAES…AKQEREASPV (82 aa)) is disordered. The span at 131 to 141 (ESERASDKSKM) shows a compositional bias: basic and acidic residues. A compositionally biased stretch (basic residues) spans 182–194 (KRSKSAKKKKRSK). A Glycyl lysine isopeptide (Lys-Gly) (interchain with G-Cter in SUMO1) cross-link involves residue Lys-196. The PHD-type zinc-finger motif lies at 213–262 (PTYCLCNQVSYGEMIGCDNEQCPIEWFHFSCVSLTYKPKGKWYCPKCRGD). Residues Cys-216, Cys-218, Cys-229, Cys-234, His-240, Cys-243, Cys-256, and Cys-259 each contribute to the Zn(2+) site. Residues 261–275 (GDNEKTMDKSTEKTK) are compositionally biased toward basic and acidic residues. Residues 261 to 281 (GDNEKTMDKSTEKTKKERRAR) are disordered. The interval 265-281 (KTMDKSTEKTKKERRAR) is PBR.

This sequence belongs to the ING family. As to quaternary structure, interacts with H3K4me3 and to a lesser extent with H3K4me2. Component of a mSin3A-like complex at least consisting of SIN3A, HDAC1, HDAC2, RBBP4/RbAp48, RBBP7/RbAp46, SAP30 and ING2. In terms of processing, sumoylation enhances its association with SIN3A and is required for binding to some target gene promoters, this is the case for TMEM71.

Its subcellular location is the nucleus. Seems to be involved in p53/TP53 activation and p53/TP53-dependent apoptotic pathways, probably by enhancing acetylation of p53/TP53. Component of a mSin3A-like corepressor complex, which is probably involved in deacetylation of nucleosomal histones. ING2 activity seems to be modulated by binding to phosphoinositides (PtdInsPs). The sequence is that of Inhibitor of growth protein 2 (Ing2) from Mus musculus (Mouse).